The chain runs to 62 residues: uncharacterized protein (62 aa).

This is an uncharacterized protein from Escherichia coli (strain K12).